Consider the following 311-residue polypeptide: Ornithine carbamoyltransferase (311 aa).

Residues 52–55 (STRT), glutamine 79, arginine 103, and 129–132 (HPVQ) each bind carbamoyl phosphate. Residues asparagine 167, aspartate 226, and 230–231 (SM) each bind L-ornithine. Residues 266 to 267 (CL) and arginine 294 each bind carbamoyl phosphate.

This sequence belongs to the aspartate/ornithine carbamoyltransferase superfamily. OTCase family.

It localises to the cytoplasm. The enzyme catalyses carbamoyl phosphate + L-ornithine = L-citrulline + phosphate + H(+). It participates in amino-acid biosynthesis; L-arginine biosynthesis; L-arginine from L-ornithine and carbamoyl phosphate: step 1/3. Functionally, reversibly catalyzes the transfer of the carbamoyl group from carbamoyl phosphate (CP) to the N(epsilon) atom of ornithine (ORN) to produce L-citrulline. The protein is Ornithine carbamoyltransferase of Sorangium cellulosum (strain So ce56) (Polyangium cellulosum (strain So ce56)).